The following is a 293-amino-acid chain: MNNWTHIPVLTKEIGQMLITDINGVYIDGTLGLGGHTKYLLGLLGKEAKIIGFDKDYNAVKMAEANVADGRLTAINLSYEAAPKVLKDLKIQGGADGVLLDLGLSSYQLDDASRGFSFMGGGPLDMRFDISGQKTAADVVNSYTAEELERIFANYGEETNARNAAAAIVRARVDKKIKTTSELANILAPVLPRRGKTHGATRVFQALRIEVNDELGTVERFIKVLPEVLKPGGRAAVITFHSLEDRIVKNIFKQMSAEGEVKLVNKHVIEPEWEEVKNNRRSRSAKLRVAEKI.

Residues 34-36, aspartate 54, leucine 86, aspartate 101, and glutamine 108 each bind S-adenosyl-L-methionine; that span reads GGH.

Belongs to the methyltransferase superfamily. RsmH family.

Its subcellular location is the cytoplasm. It catalyses the reaction cytidine(1402) in 16S rRNA + S-adenosyl-L-methionine = N(4)-methylcytidine(1402) in 16S rRNA + S-adenosyl-L-homocysteine + H(+). Its function is as follows. Specifically methylates the N4 position of cytidine in position 1402 (C1402) of 16S rRNA. This chain is Ribosomal RNA small subunit methyltransferase H, found in Elusimicrobium minutum (strain Pei191).